The following is a 737-amino-acid chain: Cilium assembly protein DZIP1L (737 aa).

The segment at 1 to 293 is interaction with Rab8; it reads MGFKGKYPQM…LKQSNEQFIQ (293 aa). Residues 98-132 are a coiled coil; sequence VTDLKEAHTTAQEEIATLRKSLSESNNEVVQLHKR. Residues 144-167 form a C2H2-type zinc finger; the sequence is YPCHLCTKNFISNEALNVHIGRKH. Disordered stretches follow at residues 167 to 187, 214 to 267, 415 to 548, 624 to 682, and 698 to 737; these read HRVASPPSLTSATGKEKDRDK, ERNI…KEQL, SEFL…RKDA, KSPL…VSRD, and IRGASKSSLSSRPVPLPRKRVMFNTTEDGKSFNDSDDNLK. Composition is skewed to basic and acidic residues over residues 244–266 and 415–438; these read EPKEKDEDSGEARQSEASERKEQ and SEFLKQKHDDDTYSIEEAPRKGSE. Over residues 457-469 the composition is skewed to polar residues; the sequence is SAGSSDSNPTYTK. The span at 492–510 shows a compositional bias: acidic residues; it reads SQEETENEEERSLTEEEGT. Over residues 665–677 the composition is skewed to polar residues; it reads SSEQQTRSPSPQR. Over residues 724 to 737 the composition is skewed to basic and acidic residues; the sequence is EDGKSFNDSDDNLK.

It belongs to the DZIP C2H2-type zinc-finger protein family. In terms of assembly, component of a ciliary transition zone (TZ)-localized complex composed of DZIP1, Fam92 and Cby. Interacts directly with Cby. Interacts with Cep290 (via N-terminus). Interacts (via N-terminus) with Rab8. In neurons of the second and third antennal segments, expressed at the tip of the dendrites.

Its subcellular location is the cytoplasm. The protein localises to the cytoskeleton. It localises to the microtubule organizing center. It is found in the centrosome. The protein resides in the centriole. Its subcellular location is the cilium basal body. Functionally, component of the DZIP1-Fam92-Cby complex which promotes ciliogenesis in sensory neurons and spermatocytes by acting downstream of Cep290 to initiate early ciliary membrane formation and thus transition zone (TZ) assembly. During spermatogenesis, also regulates distal elongation of the basal-body and their docking (anchoring) to the plasma membrane and as a consequence, regulates the initiation and proper elongation of axonemal microtubules. Within the complex, required to recruit or stabilize Rab8, Fam92 and Cby at the distal basal body of cilia to promote early ciliary membrane formation and initiate TZ assembly. Also acts with Fam92 to restrict Cep290 localization to the proximal part of the TZ. May also be involved in recruitment or stabilization of Mks1 at the TZ. The sequence is that of Cilium assembly protein DZIP1L from Drosophila melanogaster (Fruit fly).